We begin with the raw amino-acid sequence, 212 residues long: External core antigen (212 aa).

The first 19 residues, 1–19, serve as a signal peptide directing secretion; it reads MQLFHLCLIISCSCPTVQA. Residues 25–27 are HBEAG; the sequence is GWL. The segment at 172–212 is disordered; sequence LPETAVVRRRGRSPRRRTPSPRRRRSQSPRRRRSQSPASQC. Positions 178 to 205 are enriched in basic residues; sequence VRRRGRSPRRRTPSPRRRRSQSPRRRRS. The 1; half-length repeat unit spans residues 184–190; the sequence is SPRRRTP. The 3 X 8 AA repeats of S-P-R-R-R-R-S-Q stretch occupies residues 184 to 206; the sequence is SPRRRTPSPRRRRSQSPRRRRSQ. A propeptide spanning residues 184–212 is cleaved from the precursor; the sequence is SPRRRTPSPRRRRSQSPRRRRSQSPASQC. 2 tandem repeats follow at residues 191–198 and 199–206.

This sequence belongs to the orthohepadnavirus precore antigen family. In terms of assembly, homodimerizes. In terms of processing, phosphorylated. Cleaved by host furin.

It localises to the secreted. The protein localises to the host nucleus. In terms of biological role, may regulate immune response to the intracellular capsid in acting as a T-cell tolerogen, by having an immunoregulatory effect which prevents destruction of infected cells by cytotoxic T-cells. This immune regulation may predispose to chronicity during perinatal infections and prevent severe liver injury during adult infections. The protein is External core antigen of Gorilla gorilla (western gorilla).